We begin with the raw amino-acid sequence, 602 residues long: Basic-leucine zipper transcription factor B (602 aa).

Residues 1–10 (MNQFYQSTTG) show a composition bias toward polar residues. The tract at residues 1 to 128 (MNQFYQSTTG…NRVNQNLASR (128 aa)) is disordered. Low complexity-rich tracts occupy residues 11-54 (GQQN…TSTS) and 66-102 (QQQIQQQQIQQQQQQQQQQQQQIQQQSVDTPSSYNGD). The stretch at 58 to 94 (KNKDNQSKQQQIQQQQIQQQQQQQQQQQQQIQQQSVD) forms a coiled coil. A bZIP domain is found at 113–176 (ENKKNRNRVN…GVEIMKPDPA (64 aa)). A basic motif region spans residues 115 to 135 (KKNRNRVNQNLASRNYRQRKK). The interval 138 to 145 (IKEIEEKL) is leucine-zipper. Disordered stretches follow at residues 328–401 (TNLS…QNNN) and 525–602 (QNQT…PSRQ). 3 stretches are compositionally biased toward low complexity: residues 336 to 350 (PNPTSPNSSSVTQST), 358 to 401 (LTLL…QNNN), and 525 to 592 (QNQT…SSPY). A coiled-coil region spans residues 509-552 (TFSQQTQQLQQAQLQLQNQTKQQQQQLQNNNNNNNNNNNNNNSF). Polar residues predominate over residues 593–602 (NHHQQQPSRQ).

It belongs to the bZIP family. As to quaternary structure, binds DNA as a dimer. Heterodimerizes with dimA; in vitro. Also able to form homodimer; in vitro.

The protein localises to the nucleus. Transcriptional regulator involved in DIF-1 signaling. DIF-1 (Differentiation Inducing Factor-1) is a signal molecule involved in the differentiation of pstO (prestalk-O) cells. May be a direct activator of ecmA. This Dictyostelium discoideum (Social amoeba) protein is Basic-leucine zipper transcription factor B (dimB).